The sequence spans 73 residues: Large ribosomal subunit protein bL31 (73 aa).

The protein belongs to the bacterial ribosomal protein bL31 family. Type A subfamily. In terms of assembly, part of the 50S ribosomal subunit.

Its function is as follows. Binds the 23S rRNA. This is Large ribosomal subunit protein bL31 from Paracoccus denitrificans (strain Pd 1222).